Reading from the N-terminus, the 353-residue chain is uncharacterized protein (353 aa).

This sequence belongs to the mimivirus L17x/L18x family.

This is an uncharacterized protein from Acanthamoeba polyphaga (Amoeba).